The following is a 156-amino-acid chain: Cyanate hydratase (156 aa).

Catalysis depends on residues Arg-96, Glu-99, and Ser-122.

It belongs to the cyanase family.

It catalyses the reaction cyanate + hydrogencarbonate + 3 H(+) = NH4(+) + 2 CO2. In terms of biological role, catalyzes the reaction of cyanate with bicarbonate to produce ammonia and carbon dioxide. This is Cyanate hydratase from Pseudomonas aeruginosa (strain UCBPP-PA14).